The following is a 34-amino-acid chain: Stromal 70 kDa heat shock-related protein, chloroplastic (34 aa).

It belongs to the heat shock protein 70 family.

The protein localises to the plastid. It is found in the chloroplast stroma. Its function is as follows. Interacts with newly imported chloroplast proteins to assist in their maturation. The chain is Stromal 70 kDa heat shock-related protein, chloroplastic from Cucurbita maxima (Pumpkin).